We begin with the raw amino-acid sequence, 403 residues long: Phosphoglycerate kinase (403 aa).

Residues 21–23 (DFN), arginine 36, 59–62 (HLGR), arginine 119, and arginine 154 contribute to the substrate site. Residues lysine 207, glycine 299, glutamate 330, and 357 to 360 (GGDA) contribute to the ATP site.

This sequence belongs to the phosphoglycerate kinase family. Monomer.

It is found in the cytoplasm. It carries out the reaction (2R)-3-phosphoglycerate + ATP = (2R)-3-phospho-glyceroyl phosphate + ADP. It functions in the pathway carbohydrate degradation; glycolysis; pyruvate from D-glyceraldehyde 3-phosphate: step 2/5. This chain is Phosphoglycerate kinase, found in Chlamydia trachomatis serovar L2 (strain ATCC VR-902B / DSM 19102 / 434/Bu).